We begin with the raw amino-acid sequence, 432 residues long: Adenosylhomocysteinase (432 aa).

Substrate-binding residues include Thr-56, Asp-131, and Glu-156. Residue 157–159 (TTT) coordinates NAD(+). Residues Lys-186 and Asp-190 each contribute to the substrate site. Residues 222–227 (GDVGKG), Glu-243, Asn-248, 299–301 (IGH), Asn-346, His-353, Lys-426, 426–430 (KPDHY), and Tyr-430 each bind NAD(+).

It belongs to the adenosylhomocysteinase family. As to quaternary structure, interacts with AhcyL1; the interaction may negatively regulate Ahcy catalytic activity. It depends on NAD(+) as a cofactor.

The catalysed reaction is S-adenosyl-L-homocysteine + H2O = L-homocysteine + adenosine. The protein operates within amino-acid biosynthesis; L-homocysteine biosynthesis; L-homocysteine from S-adenosyl-L-homocysteine: step 1/1. Its function is as follows. Adenosylhomocysteine is a competitive inhibitor of S-adenosyl-L-methionine-dependent methyl transferase reactions; therefore adenosylhomocysteinase may play a key role in the control of methylations via regulation of the intracellular concentration of adenosylhomocysteine. The polypeptide is Adenosylhomocysteinase (Drosophila melanogaster (Fruit fly)).